Consider the following 101-residue polypeptide: MDPVDPRLEPWKHPGSQPKAACTSCYCKKCCFHCQVCFTTKGLGISYGRKKRRQRRRAPQDSQTHQVSLPKQPASQARGDPTGPKESKKKVERETETDPVD.

The segment covering 1–12 has biased composition (basic and acidic residues); it reads MDPVDPRLEPWK. The disordered stretch occupies residues 1–20; that stretch reads MDPVDPRLEPWKHPGSQPKA. The segment at 1 to 24 is interaction with human CREBBP; the sequence is MDPVDPRLEPWKHPGSQPKAACTS. Residues 1–48 are transactivation; sequence MDPVDPRLEPWKHPGSQPKAACTSCYCKKCCFHCQVCFTTKGLGISYG. The Zn(2+) site is built by cysteine 22, cysteine 25, and cysteine 27. The segment at 22–37 is cysteine-rich; that stretch reads CTSCYCKKCCFHCQVC. At lysine 28 the chain carries N6-acetyllysine; by host PCAF. Positions 30, 33, 34, and 37 each coordinate Zn(2+). The segment at 38-48 is core; that stretch reads FTTKGLGISYG. Basic residues predominate over residues 48-57; sequence GRKKRRQRRR. Positions 48–101 are disordered; the sequence is GRKKRRQRRRAPQDSQTHQVSLPKQPASQARGDPTGPKESKKKVERETETDPVD. The Nuclear localization signal, RNA-binding (TAR), and protein transduction signature appears at 49–57; it reads RKKRRQRRR. Positions 49–86 are interaction with the host capping enzyme RNGTT; it reads RKKRRQRRRAPQDSQTHQVSLPKQPASQARGDPTGPKE. N6-acetyllysine; by host EP300 and GCN5L2 is present on residues lysine 50 and lysine 51. Asymmetric dimethylarginine; by host PRMT6 is present on residues arginine 52 and arginine 53. Over residues 60–75 the composition is skewed to polar residues; the sequence is QDSQTHQVSLPKQPAS. Residue lysine 71 forms a Glycyl lysine isopeptide (Lys-Gly) (interchain with G-Cter in ubiquitin) linkage. A Cell attachment site motif is present at residues 78 to 80; that stretch reads RGD. The segment covering 83 to 101 has biased composition (basic and acidic residues); the sequence is GPKESKKKVERETETDPVD.

This sequence belongs to the lentiviruses Tat family. As to quaternary structure, interacts with host CCNT1. Associates with the P-TEFb complex composed at least of Tat, P-TEFb (CDK9 and CCNT1), TAR RNA, RNA Pol II. Recruits the HATs CREBBP, TAF1/TFIID, EP300, PCAF and GCN5L2. Interacts with host KAT5/Tip60; this interaction targets the latter to degradation. Interacts with the host deacetylase SIRT1. Interacts with host capping enzyme RNGTT; this interaction stimulates RNGTT. Binds to host KDR, and to the host integrins ITGAV/ITGB3 and ITGA5/ITGB1. Interacts with host KPNB1/importin beta-1 without previous binding to KPNA1/importin alpha-1. Interacts with EIF2AK2. Interacts with host nucleosome assembly protein NAP1L1; this interaction may be required for the transport of Tat within the nucleus, since the two proteins interact at the nuclear rim. Interacts with host C1QBP/SF2P32; this interaction involves lysine-acetylated Tat. Interacts with the host chemokine receptors CCR2, CCR3 and CXCR4. Interacts with host DPP4/CD26; this interaction may trigger an anti-proliferative effect. Interacts with host LDLR. Interacts with the host extracellular matrix metalloproteinase MMP1. Interacts with host PRMT6; this interaction mediates Tat's methylation. Interacts with, and is ubiquitinated by MDM2/Hdm2. Interacts with host PSMC3 and HTATIP2. Interacts with STAB1; this interaction may overcome SATB1-mediated repression of IL2 and IL2RA (interleukin) in T cells by binding to the same domain than HDAC1. Interacts (when acetylated) with human CDK13, thereby increasing HIV-1 mRNA splicing and promoting the production of the doubly spliced HIV-1 protein Nef. Interacts with host TBP; this interaction modulates the activity of transcriptional pre-initiation complex. Interacts with host RELA. Interacts with host PLSCR1; this interaction negatively regulates Tat transactivation activity by altering its subcellular distribution. Post-translationally, asymmetrical arginine methylation by host PRMT6 seems to diminish the transactivation capacity of Tat and affects the interaction with host CCNT1. In terms of processing, acetylation by EP300, CREBBP, GCN5L2/GCN5 and PCAF regulates the transactivation activity of Tat. EP300-mediated acetylation of Lys-50 promotes dissociation of Tat from the TAR RNA through the competitive binding to PCAF's bromodomain. In addition, the non-acetylated Tat's N-terminus can also interact with PCAF. PCAF-mediated acetylation of Lys-28 enhances Tat's binding to CCNT1. Lys-50 is deacetylated by SIRT1. Polyubiquitination by host MDM2 does not target Tat to degradation, but activates its transactivation function and fosters interaction with CCNT1 and TAR RNA. Post-translationally, phosphorylated by EIF2AK2 on serine and threonine residues adjacent to the basic region important for TAR RNA binding and function. Phosphorylation of Tat by EIF2AK2 is dependent on the prior activation of EIF2AK2 by dsRNA.

It is found in the host nucleus. It localises to the host nucleolus. The protein resides in the host cytoplasm. The protein localises to the secreted. Transcriptional activator that increases RNA Pol II processivity, thereby increasing the level of full-length viral transcripts. Recognizes a hairpin structure at the 5'-LTR of the nascent viral mRNAs referred to as the transactivation responsive RNA element (TAR) and recruits the cyclin T1-CDK9 complex (P-TEFb complex) that will in turn hyperphosphorylate the RNA polymerase II to allow efficient elongation. The CDK9 component of P-TEFb and other Tat-activated kinases hyperphosphorylate the C-terminus of RNA Pol II that becomes stabilized and much more processive. Other factors such as HTATSF1/Tat-SF1, SUPT5H/SPT5, and HTATIP2 are also important for Tat's function. Besides its effect on RNA Pol II processivity, Tat induces chromatin remodeling of proviral genes by recruiting the histone acetyltransferases (HATs) CREBBP, EP300 and PCAF to the chromatin. This also contributes to the increase in proviral transcription rate, especially when the provirus integrates in transcriptionally silent region of the host genome. To ensure maximal activation of the LTR, Tat mediates nuclear translocation of NF-kappa-B by interacting with host RELA. Through its interaction with host TBP, Tat may also modulate transcription initiation. Tat can reactivate a latently infected cell by penetrating in it and transactivating its LTR promoter. In the cytoplasm, Tat is thought to act as a translational activator of HIV-1 mRNAs. Functionally, extracellular circulating Tat can be endocytosed by surrounding uninfected cells via the binding to several surface receptors such as CD26, CXCR4, heparan sulfate proteoglycans (HSPG) or LDLR. Neurons are rarely infected, but they internalize Tat via their LDLR. Through its interaction with nuclear HATs, Tat is potentially able to control the acetylation-dependent cellular gene expression. Modulates the expression of many cellular genes involved in cell survival, proliferation or in coding for cytokines or cytokine receptors. Tat plays a role in T-cell and neurons apoptosis. Tat induced neurotoxicity and apoptosis probably contribute to neuroAIDS. Circulating Tat also acts as a chemokine-like and/or growth factor-like molecule that binds to specific receptors on the surface of the cells, affecting many cellular pathways. In the vascular system, Tat binds to ITGAV/ITGB3 and ITGA5/ITGB1 integrins dimers at the surface of endothelial cells and competes with bFGF for heparin-binding sites, leading to an excess of soluble bFGF. This is Protein Tat from Homo sapiens (Human).